The following is a 469-amino-acid chain: UDP-N-acetylmuramate--L-alanine ligase (469 aa).

114-120 (GTHGKTT) is a binding site for ATP.

Belongs to the MurCDEF family.

Its subcellular location is the cytoplasm. It catalyses the reaction UDP-N-acetyl-alpha-D-muramate + L-alanine + ATP = UDP-N-acetyl-alpha-D-muramoyl-L-alanine + ADP + phosphate + H(+). It functions in the pathway cell wall biogenesis; peptidoglycan biosynthesis. Functionally, cell wall formation. The chain is UDP-N-acetylmuramate--L-alanine ligase from Sinorhizobium fredii (strain NBRC 101917 / NGR234).